Consider the following 229-residue polypeptide: Ribosomal RNA large subunit methyltransferase E (229 aa).

The tract at residues 1–20 (MSRAGNGGRQRIKTAKGRSA) is disordered. The S-adenosyl-L-methionine site is built by Gly75, Trp77, Asp94, Asp110, and Asp134. Lys174 functions as the Proton acceptor in the catalytic mechanism.

It belongs to the class I-like SAM-binding methyltransferase superfamily. RNA methyltransferase RlmE family.

Its subcellular location is the cytoplasm. The catalysed reaction is uridine(2552) in 23S rRNA + S-adenosyl-L-methionine = 2'-O-methyluridine(2552) in 23S rRNA + S-adenosyl-L-homocysteine + H(+). Its function is as follows. Specifically methylates the uridine in position 2552 of 23S rRNA at the 2'-O position of the ribose in the fully assembled 50S ribosomal subunit. In Rhizorhabdus wittichii (strain DSM 6014 / CCUG 31198 / JCM 15750 / NBRC 105917 / EY 4224 / RW1) (Sphingomonas wittichii), this protein is Ribosomal RNA large subunit methyltransferase E.